The sequence spans 120 residues: Meiosis expressed gene 1 protein homolog (120 aa).

Positions 1–45 are disordered; it reads MDGLAIGGVSAPMTAERPQQVKKQLSRRTPDAADGRKPTRMERAK. Over residues 28–45 the composition is skewed to basic and acidic residues; it reads RTPDAADGRKPTRMERAK.

It belongs to the MEIG1 family.

In Oxyrrhis marina (Dinoflagellate), this protein is Meiosis expressed gene 1 protein homolog.